Consider the following 252-residue polypeptide: Ribosomal RNA small subunit methyltransferase NEP1 (252 aa).

S-adenosyl-L-methionine is bound by residues Met176, Gly209, Gly214, and 227-232 (ISNYPL).

This sequence belongs to the class IV-like SAM-binding methyltransferase superfamily. RNA methyltransferase NEP1 family. In terms of assembly, homodimer. Part of the small subunit (SSU) processome, composed of more than 70 proteins and the RNA chaperone small nucleolar RNA (snoRNA) U3.

Its subcellular location is the nucleus. The protein localises to the nucleolus. The enzyme catalyses a pseudouridine in rRNA + S-adenosyl-L-methionine = an N(1)-methylpseudouridine in rRNA + S-adenosyl-L-homocysteine + H(+). In terms of biological role, S-adenosyl-L-methionine-dependent pseudouridine N(1)-methyltransferase that methylates a pseudouridine in 18S rRNA. Involved the biosynthesis of the hypermodified N1-methyl-N3-(3-amino-3-carboxypropyl) pseudouridine (m1acp3-Psi) conserved in eukaryotic 18S rRNA. Also has an essential role in 40S ribosomal subunit biogenesis independent on its methyltransferase activity, facilitating the incorporation of ribosomal protein S19 during the formation of pre-ribosomes. S-adenosyl-L-methionine-dependent pseudouridine N(1)-methyltransferase that methylates pseudouridine at position in 18S rRNA. Involved the biosynthesis of the hypermodified N1-methyl-N3-(3-amino-3-carboxypropyl) pseudouridine (m1acp3-Psi) conserved in eukaryotic 18S rRNA. Is not able to methylate uridine at this position. Also has an essential role in 40S ribosomal subunit biogenesis independent on its methyltransferase activity, facilitating the incorporation of ribosomal protein S19 during the formation of pre-ribosomes. Part of the small subunit (SSU) processome, first precursor of the small eukaryotic ribosomal subunit. During the assembly of the SSU processome in the nucleolus, many ribosome biogenesis factors, an RNA chaperone and ribosomal proteins associate with the nascent pre-rRNA and work in concert to generate RNA folding, modifications, rearrangements and cleavage as well as targeted degradation of pre-ribosomal RNA by the RNA exosome. This is Ribosomal RNA small subunit methyltransferase NEP1 from Drosophila melanogaster (Fruit fly).